Consider the following 201-residue polypeptide: Inosine triphosphate pyrophosphatase (201 aa).

13–18 (TGNAKK) is an ITP binding site. Residue Glu43 coordinates Mg(2+). ITP contacts are provided by residues Lys55, 71–72 (DT), Lys88, 148–151 (FGWD), Lys171, and 176–177 (HR).

This sequence belongs to the HAM1 NTPase family. Homodimer. Mg(2+) is required as a cofactor. Requires Mn(2+) as cofactor.

The protein resides in the cytoplasm. The catalysed reaction is ITP + H2O = IMP + diphosphate + H(+). It catalyses the reaction dITP + H2O = dIMP + diphosphate + H(+). The enzyme catalyses XTP + H2O = XMP + diphosphate + H(+). It carries out the reaction N(6)-hydroxy-dATP + H2O = N(6)-hydroxy-dAMP + diphosphate + H(+). Pyrophosphatase that hydrolyzes the non-canonical purine nucleotides inosine triphosphate (ITP), deoxyinosine triphosphate (dITP) as well as 2'-deoxy-N-6-hydroxylaminopurine triphosphate (dHAPTP) and xanthosine 5'-triphosphate (XTP) to their respective monophosphate derivatives. The enzyme does not distinguish between the deoxy- and ribose forms. Probably excludes non-canonical purines from RNA and DNA precursor pools, thus preventing their incorporation into RNA and DNA and avoiding chromosomal lesions. The polypeptide is Inosine triphosphate pyrophosphatase (Gallus gallus (Chicken)).